Reading from the N-terminus, the 66-residue chain is Large ribosomal subunit protein bL33c (66 aa).

Belongs to the bacterial ribosomal protein bL33 family.

It localises to the plastid. The protein resides in the chloroplast. The polypeptide is Large ribosomal subunit protein bL33c (rpl33) (Arabidopsis thaliana (Mouse-ear cress)).